A 368-amino-acid chain; its full sequence is DNA replication and repair protein RecF (368 aa).

Glycine 30 to threonine 37 contributes to the ATP binding site.

The protein belongs to the RecF family.

Its subcellular location is the cytoplasm. Functionally, the RecF protein is involved in DNA metabolism; it is required for DNA replication and normal SOS inducibility. RecF binds preferentially to single-stranded, linear DNA. It also seems to bind ATP. The polypeptide is DNA replication and repair protein RecF (Streptococcus pyogenes serotype M12 (strain MGAS9429)).